The following is a 156-amino-acid chain: RNA polymerase sigma factor SigS (156 aa).

Residues 29-44 (EYYQLLLIKMWQLSQI) carry the Polymerase core binding motif. The H-T-H motif DNA-binding region spans 126–145 (QFEIAEIMSLSLSTIKLIKM).

Belongs to the sigma-70 factor family.

Sigma factors are initiation factors that promote the attachment of RNA polymerase to specific initiation sites and are then released. Sigma-S contributes to the protection against external stress, thus playing a role in cellular fitness and survival. The chain is RNA polymerase sigma factor SigS (sigS) from Staphylococcus aureus (strain COL).